The sequence spans 434 residues: AT-rich interactive domain-containing protein 5 (434 aa).

Positions 1–120 (MMADTEMQEQ…SSPHVPEESV (120 aa)) are disordered. Basic and acidic residues-rich tracts occupy residues 25 to 37 (ELEKDLNSIERPK), 43 to 54 (DTTHTLDSDVHL), and 78 to 90 (RNGDVDQSEKKIT). The segment covering 92–102 (DGGQEETTLGE) has biased composition (polar residues). In terms of domain architecture, ARID spans 142–233 (PQDQEAFIKE…ALLEYEKHLR (92 aa)). Residues 237–274 (ELNLPGSASLPSSGIEKEASSHQASGSGRTRRDAAARA) are disordered. The 99-residue stretch at 336 to 434 (AEVIDVGPPA…RLFVRVPFEQ (99 aa)) folds into the sHSP domain.

Belongs to the small heat shock protein (HSP20) family.

The protein localises to the nucleus. This chain is AT-rich interactive domain-containing protein 5 (ARID5), found in Arabidopsis thaliana (Mouse-ear cress).